The chain runs to 288 residues: Oxaloacetate decarboxylase (288 aa).

Residue serine 47 participates in substrate binding. Aspartate 85 contributes to the Mg(2+) binding site. 2 residues coordinate substrate: arginine 156 and histidine 232.

This sequence belongs to the isocitrate lyase/PEP mutase superfamily. Oxaloacetate decarboxylase family. Homotetramer; dimer of dimers. Mg(2+) serves as cofactor.

The catalysed reaction is oxaloacetate + H(+) = pyruvate + CO2. Catalyzes the decarboxylation of oxaloacetate into pyruvate. Seems to play a role in maintaining cellular concentrations of bicarbonate and pyruvate. The sequence is that of Oxaloacetate decarboxylase from Rhodopseudomonas palustris (strain BisB18).